The primary structure comprises 391 residues: Putative 8-amino-7-oxononanoate synthase (391 aa).

2 residues coordinate substrate: Arg-22 and His-135. Residues Ser-183, Asp-208 to His-211, and Thr-239 to Lys-242 contribute to the pyridoxal 5'-phosphate site. N6-(pyridoxal phosphate)lysine is present on Lys-242. Thr-358 is a binding site for substrate.

Belongs to the class-II pyridoxal-phosphate-dependent aminotransferase family. BioF subfamily. Homodimer. Requires pyridoxal 5'-phosphate as cofactor.

The catalysed reaction is 6-carboxyhexanoyl-[ACP] + L-alanine + H(+) = (8S)-8-amino-7-oxononanoate + holo-[ACP] + CO2. Its pathway is cofactor biosynthesis; biotin biosynthesis. In terms of biological role, catalyzes the decarboxylative condensation of pimeloyl-[acyl-carrier protein] and L-alanine to produce 8-amino-7-oxononanoate (AON), [acyl-carrier protein], and carbon dioxide. This Thermosynechococcus vestitus (strain NIES-2133 / IAM M-273 / BP-1) protein is Putative 8-amino-7-oxononanoate synthase (bioF).